A 151-amino-acid polypeptide reads, in one-letter code: Small ribosomal subunit protein uS15 (151 aa).

Residues 1–20 (MARLHSGKRGSSGSTRPLRT) form a disordered region.

This sequence belongs to the universal ribosomal protein uS15 family. As to quaternary structure, part of the 30S ribosomal subunit.

The polypeptide is Small ribosomal subunit protein uS15 (Methanococcus maripaludis (strain C7 / ATCC BAA-1331)).